Reading from the N-terminus, the 497-residue chain is Casein kinase I isoform delta (497 aa).

2 disordered regions span residues 1–58 (MATM…EEMN) and 86–109 (PIQQ…HPTQ). Residues 14–34 (WHNNTSTPMDTTEPATNSHNP) show a composition bias toward polar residues. Low complexity predominate over residues 88–105 (QQHQQPPLLQQAQPSQIP). Residues 191–458 (FRLGRKIGSG…YLRNLFRTLF (268 aa)) form the Protein kinase domain. ATP contacts are provided by residues 197-205 (IGSGSFGDI) and Lys220. Asp310 functions as the Proton acceptor in the catalytic mechanism.

Belongs to the protein kinase superfamily. CK1 Ser/Thr protein kinase family. Casein kinase I subfamily. Monomer. In terms of tissue distribution, expressed throughout larval development and into the adult stage in both hypodermal seam cells and the hermaphrodite specific neuron.

The protein resides in the cytoplasm. Its subcellular location is the nucleus. It is found in the chromosome. It localises to the centromere. The protein localises to the cell junction. The protein resides in the adherens junction. The enzyme catalyses L-seryl-[protein] + ATP = O-phospho-L-seryl-[protein] + ADP + H(+). It carries out the reaction L-threonyl-[protein] + ATP = O-phospho-L-threonyl-[protein] + ADP + H(+). Its activity is regulated as follows. Exhibits substrate-dependent heparin activation. In terms of biological role, essential serine/threonine-protein kinase that regulates diverse cellular growth and survival processes including Wnt signaling, DNA repair and circadian rhythms. Casein kinases are operationally defined by their preferential utilization of acidic proteins. Positively regulates the expression of components of the heterochronic pathway, which regulate developmental timing, such as the transcriptional repressor lin-42 and microRNAs such as let-7. Negatively regulates cell cycle exit and cell fusion to prevent the premature differentiation of hypodermal seam cells into adult cells. Plays a role in regulating axon branching and subsequently, the maturation of the nervous system, most likely by preventing the premature termination of transcripts for proteins such as Ankyrin/unc-44, which are required for maintaining the nervous system. May phosphorylate ssup-72 to promote nervous system maturation. This is Casein kinase I isoform delta from Caenorhabditis elegans.